Consider the following 178-residue polypeptide: PRA1 family protein 2 (178 aa).

The Cytoplasmic portion of the chain corresponds to Met1–Leu41. A helical membrane pass occupies residues Leu42–Val62. At Arg63–Pro64 the chain is on the extracellular side. A helical membrane pass occupies residues Leu65 to Ala85. Over Glu86–Arg96 the chain is Cytoplasmic. The helical transmembrane segment at Ser97–Gly119 threads the bilayer. Topologically, residues Ala120–Thr122 are extracellular. The chain crosses the membrane as a helical span at residues Phe123 to Leu140. The Cytoplasmic segment spans residues Arg141 to Ser178.

The protein belongs to the PRA1 family. In terms of assembly, interacts with CCR5 and GDE1.

It is found in the endosome membrane. In terms of biological role, may be involved in ER/Golgi transport and vesicular traffic. Plays a proapoptotic role in cerulenin-induced neuroblastoma apoptosis. This chain is PRA1 family protein 2 (PRAF2), found in Macaca fascicularis (Crab-eating macaque).